Consider the following 129-residue polypeptide: Sulfurtransferase TusD (129 aa).

The Cysteine persulfide intermediate role is filled by Cys79.

Belongs to the DsrE/TusD family. As to quaternary structure, heterohexamer, formed by a dimer of trimers. The hexameric TusBCD complex contains 2 copies each of TusB, TusC and TusD. The TusBCD complex interacts with TusE.

It localises to the cytoplasm. Its function is as follows. Part of a sulfur-relay system required for 2-thiolation of 5-methylaminomethyl-2-thiouridine (mnm(5)s(2)U) at tRNA wobble positions. Accepts sulfur from TusA and transfers it in turn to TusE. This Pectobacterium atrosepticum (strain SCRI 1043 / ATCC BAA-672) (Erwinia carotovora subsp. atroseptica) protein is Sulfurtransferase TusD.